The following is a 121-amino-acid chain: Chromosome transmission fidelity protein 8 homolog (121 aa).

Belongs to the CTF8 family. In terms of assembly, component of the CTF18-RFC complex, which consists of CTF18, CTF8, DSCC1, RFC2, RFC3, RFC4 and RFC5. The CTF18-RFC complex does not interact with the Rad9/Rad1/Hus1 complex. The CTF18-RFC complex interacts with POLH. CTF18/CTF8/DSCC1 associate with PCNA. CTF8 exists as a dimer with DSCC1.

The protein resides in the nucleus. Its function is as follows. Chromosome cohesion factor involved in sister chromatid cohesion and fidelity of chromosome transmission. Component of one of the cell nuclear antigen loader complexes, CTF18-replication factor C (CTF18-RFC), which consists of CTF18, CTF8, DSCC1, RFC2, RFC3, RFC4 and RFC5. The CTF18-RFC complex binds to single-stranded and primed DNAs and has weak ATPase activity that is stimulated the presence of primed DNA, replication protein A (RPA) and proliferating cell nuclear antigen (PCNA). The CTF18-RFC complex catalyzes the ATP-dependent loading of PCNA onto primed and gapped DNA. It also interacts with and stimulates POLH, which is suggestive of a protein network that coordinates DNA repair, recombination and chromosome cohesion reactions with replication fork progression. The chain is Chromosome transmission fidelity protein 8 homolog from Rattus norvegicus (Rat).